Consider the following 518-residue polypeptide: Probable inorganic carbon transporter subunit DabB (518 aa).

13 helical membrane-spanning segments follow: residues 3–23 (MQWV…LGSL), 37–57 (ISLL…FEWV), 65–85 (WVGV…IAFV), 114–134 (CVVT…WIAI), 165–185 (AEAC…TWFI), 207–227 (MLLA…GWLI), 242–262 (AGII…IVLS), 264–284 (MAQW…ALVM), 302–322 (MGLM…LHLV), 358–378 (WWFA…LADL), 379–399 (SGPY…IAER), 403–423 (LTSS…VVYT), and 442–462 (WKGD…YFLL).

It belongs to the inorganic carbon transporter (TC 9.A.2) DabB family. In terms of assembly, forms a complex with DabA.

It localises to the cell inner membrane. Its activity is regulated as follows. Intracellular DIC accumulation is sensitive to CCCP (carbonyl cyanide-m-chlorophenylhydrazone) and DCCD (N,N-dicyclohexylcarbodiimide) and therefore likely driven by either proton gradient, ATP, or both. In terms of biological role, part of an energy-coupled inorganic carbon pump involved in transport of dissolved inorganic carbon (DIC) with downstream gene dabA (Tcr_0854); has been suggested to be a proton-DIC symporter. In Hydrogenovibrio crunogenus (strain DSM 25203 / XCL-2) (Thiomicrospira crunogena), this protein is Probable inorganic carbon transporter subunit DabB.